Here is a 521-residue protein sequence, read N- to C-terminus: Glucose-1-phosphate adenylyltransferase small subunit, chloroplastic (521 aa).

The disordered stretch occupies residues 1–24; it reads MAASIGALKSSPSSHNCINERRND. The N-terminal 72 residues, 1–72, are a transit peptide targeting the chloroplast; it reads MAASIGALKS…RSPLIVSPKA (72 aa).

The protein belongs to the bacterial/plant glucose-1-phosphate adenylyltransferase family. As to quaternary structure, heterotetramer.

The protein localises to the plastid. Its subcellular location is the chloroplast. It carries out the reaction alpha-D-glucose 1-phosphate + ATP + H(+) = ADP-alpha-D-glucose + diphosphate. The protein operates within glycan biosynthesis; starch biosynthesis. Activated by 3'phosphoglycerate, inhibited by orthophosphate. Allosteric regulation. In terms of biological role, this protein plays a role in synthesis of starch. It catalyzes the synthesis of the activated glycosyl donor, ADP-glucose from Glc-1-P and ATP. This Solanum lycopersicum (Tomato) protein is Glucose-1-phosphate adenylyltransferase small subunit, chloroplastic.